Consider the following 713-residue polypeptide: Phosphoribosylformylglycinamidine synthase subunit PurL (713 aa).

His34 is an active-site residue. ATP contacts are provided by Tyr37 and Arg73. Mg(2+) is bound at residue Glu75. Substrate contacts are provided by residues 76 to 79 and Arg98; that span reads SHNH. His77 acts as the Proton acceptor in catalysis. Asp99 is a binding site for Mg(2+). Gln221 lines the substrate pocket. Asp249 is a binding site for Mg(2+). 292–294 contacts substrate; sequence ESQ. Residues Asp474 and Gly511 each coordinate ATP. A substrate-binding site is contributed by Ser514.

It belongs to the FGAMS family. In terms of assembly, monomer. Part of the FGAM synthase complex composed of 1 PurL, 1 PurQ and 2 PurS subunits.

The protein resides in the cytoplasm. It catalyses the reaction N(2)-formyl-N(1)-(5-phospho-beta-D-ribosyl)glycinamide + L-glutamine + ATP + H2O = 2-formamido-N(1)-(5-O-phospho-beta-D-ribosyl)acetamidine + L-glutamate + ADP + phosphate + H(+). It functions in the pathway purine metabolism; IMP biosynthesis via de novo pathway; 5-amino-1-(5-phospho-D-ribosyl)imidazole from N(2)-formyl-N(1)-(5-phospho-D-ribosyl)glycinamide: step 1/2. In terms of biological role, part of the phosphoribosylformylglycinamidine synthase complex involved in the purines biosynthetic pathway. Catalyzes the ATP-dependent conversion of formylglycinamide ribonucleotide (FGAR) and glutamine to yield formylglycinamidine ribonucleotide (FGAM) and glutamate. The FGAM synthase complex is composed of three subunits. PurQ produces an ammonia molecule by converting glutamine to glutamate. PurL transfers the ammonia molecule to FGAR to form FGAM in an ATP-dependent manner. PurS interacts with PurQ and PurL and is thought to assist in the transfer of the ammonia molecule from PurQ to PurL. This Ignicoccus hospitalis (strain KIN4/I / DSM 18386 / JCM 14125) protein is Phosphoribosylformylglycinamidine synthase subunit PurL.